A 145-amino-acid chain; its full sequence is D-aminoacyl-tRNA deacylase (145 aa).

The short motif at 133 to 134 (GP) is the Gly-cisPro motif, important for rejection of L-amino acids element.

Belongs to the DTD family. As to quaternary structure, homodimer.

The protein localises to the cytoplasm. It catalyses the reaction glycyl-tRNA(Ala) + H2O = tRNA(Ala) + glycine + H(+). The enzyme catalyses a D-aminoacyl-tRNA + H2O = a tRNA + a D-alpha-amino acid + H(+). Functionally, an aminoacyl-tRNA editing enzyme that deacylates mischarged D-aminoacyl-tRNAs. Also deacylates mischarged glycyl-tRNA(Ala), protecting cells against glycine mischarging by AlaRS. Acts via tRNA-based rather than protein-based catalysis; rejects L-amino acids rather than detecting D-amino acids in the active site. By recycling D-aminoacyl-tRNA to D-amino acids and free tRNA molecules, this enzyme counteracts the toxicity associated with the formation of D-aminoacyl-tRNA entities in vivo and helps enforce protein L-homochirality. In Cutibacterium acnes (strain DSM 16379 / KPA171202) (Propionibacterium acnes), this protein is D-aminoacyl-tRNA deacylase.